A 206-amino-acid chain; its full sequence is Probable thymidylate kinase (206 aa).

7-14 (GIDGSGKS) lines the ATP pocket.

It belongs to the thymidylate kinase family.

It carries out the reaction dTMP + ATP = dTDP + ADP. This Methanospirillum hungatei JF-1 (strain ATCC 27890 / DSM 864 / NBRC 100397 / JF-1) protein is Probable thymidylate kinase.